Consider the following 150-residue polypeptide: Transcriptional repressor NrdR (150 aa).

The segment at 3–34 (CPFCNFEESKVVDSRATDDNTTIRRRRECLNC) is a zinc-finger region. Residues 49 to 139 (VLVVKKDLAR…VYRQFKDINT (91 aa)) form the ATP-cone domain.

Belongs to the NrdR family. The cofactor is Zn(2+).

Functionally, negatively regulates transcription of bacterial ribonucleotide reductase nrd genes and operons by binding to NrdR-boxes. The sequence is that of Transcriptional repressor NrdR from Clostridium botulinum (strain Eklund 17B / Type B).